Consider the following 369-residue polypeptide: 2-aminoethylphosphonate--pyruvate transaminase (369 aa).

N6-(pyridoxal phosphate)lysine is present on Lys193.

Belongs to the class-V pyridoxal-phosphate-dependent aminotransferase family. PhnW subfamily. As to quaternary structure, homodimer. Pyridoxal 5'-phosphate is required as a cofactor.

The enzyme catalyses (2-aminoethyl)phosphonate + pyruvate = phosphonoacetaldehyde + L-alanine. Involved in phosphonate degradation. This Pseudomonas fluorescens (strain Pf0-1) protein is 2-aminoethylphosphonate--pyruvate transaminase.